Consider the following 301-residue polypeptide: Probable alpha-L-glutamate ligase (301 aa).

One can recognise an ATP-grasp domain in the interval 104–287; that stretch reads LQLLSRRGIG…VAGMIIEHLE (184 aa). Residues lysine 141, 178–179, aspartate 187, and 211–213 contribute to the ATP site; these read EY and RSN. Mg(2+) contacts are provided by aspartate 248, glutamate 260, and asparagine 262. Residues aspartate 248, glutamate 260, and asparagine 262 each contribute to the Mn(2+) site.

It belongs to the RimK family. The cofactor is Mg(2+). Mn(2+) is required as a cofactor.

The chain is Probable alpha-L-glutamate ligase from Pseudomonas putida (strain W619).